The chain runs to 152 residues: Peptide deformylase (152 aa).

Fe cation-binding residues include C88 and H130. E131 is an active-site residue. H134 lines the Fe cation pocket.

It belongs to the polypeptide deformylase family. It depends on Fe(2+) as a cofactor.

It catalyses the reaction N-terminal N-formyl-L-methionyl-[peptide] + H2O = N-terminal L-methionyl-[peptide] + formate. Functionally, removes the formyl group from the N-terminal Met of newly synthesized proteins. Requires at least a dipeptide for an efficient rate of reaction. N-terminal L-methionine is a prerequisite for activity but the enzyme has broad specificity at other positions. The sequence is that of Peptide deformylase from Syntrophomonas wolfei subsp. wolfei (strain DSM 2245B / Goettingen).